The chain runs to 244 residues: MNIDLNADLGEGCASDSELLTLVSSANIASGFHAGDAQTMLTCVREALKNGVAIGAHPSFPDRDNFGRTAMVLPPETVYAQTLYQIGALGAIVQAQGGVMRHVKPHGMLYNQAAKDPRLAQAIAKAVHDYDPSLILVGLAGSELIRAGERCRLVTRQEVFADRGYQADGSLVPRMQPGALIHDEEQALAQTLDMVQAGRVKSVTGVWTTVTAQTVCIHGDGEYALAFARRLRAAFNARNIHVIA.

The protein belongs to the LamB/PxpA family. Forms a complex composed of PxpA, PxpB and PxpC.

The enzyme catalyses 5-oxo-L-proline + ATP + 2 H2O = L-glutamate + ADP + phosphate + H(+). Its function is as follows. Catalyzes the cleavage of 5-oxoproline to form L-glutamate coupled to the hydrolysis of ATP to ADP and inorganic phosphate. The protein is 5-oxoprolinase subunit A of Salmonella paratyphi A (strain ATCC 9150 / SARB42).